Here is a 331-residue protein sequence, read N- to C-terminus: Beta-ketoacyl-[acyl-carrier-protein] synthase III (331 aa).

Active-site residues include cysteine 115 and histidine 255. The segment at 256-260 is ACP-binding; the sequence is QANFR. Asparagine 285 is an active-site residue.

It belongs to the thiolase-like superfamily. FabH family. As to quaternary structure, homodimer.

It localises to the cytoplasm. The enzyme catalyses malonyl-[ACP] + acetyl-CoA + H(+) = 3-oxobutanoyl-[ACP] + CO2 + CoA. It functions in the pathway lipid metabolism; fatty acid biosynthesis. Catalyzes the condensation reaction of fatty acid synthesis by the addition to an acyl acceptor of two carbons from malonyl-ACP. Catalyzes the first condensation reaction which initiates fatty acid synthesis and may therefore play a role in governing the total rate of fatty acid production. Possesses both acetoacetyl-ACP synthase and acetyl transacylase activities. Its substrate specificity determines the biosynthesis of branched-chain and/or straight-chain of fatty acids. The polypeptide is Beta-ketoacyl-[acyl-carrier-protein] synthase III (Helicobacter pylori (strain Shi470)).